The chain runs to 284 residues: uncharacterized protein (284 aa).

Polar residues predominate over residues 1–27 (MSNLPTSTPVSPSNLAEENPKSNNPES). Disordered regions lie at residues 1–29 (MSNL…ESSE) and 248–284 (TRDS…LKKK).

This is an uncharacterized protein from Caenorhabditis elegans.